A 210-amino-acid chain; its full sequence is MKNYFDSPFKGELLSEQVKNPNIKVGRYSYYSGYYHGHSFDECARYLHPDRDDVDKLIIGSFCSIGSGASFIMAGNQGHRHDWASSFPFFYMQEEPAFSSALDAFQRAGDTAIGNDVWIGSEAMIMPGIKIGDGAVIGSRSLVTKDVVPYAIIGGSPAKQIKKRFSDEEISLLMEMEWWNWPLDKIKTAMPLLCSSNIFGLHKYWREFVV.

Residue histidine 79 is part of the active site.

The protein belongs to the transferase hexapeptide repeat family.

It carries out the reaction chloramphenicol + acetyl-CoA = chloramphenicol 3-acetate + CoA. This enzyme is an effector of chloramphenicol resistance in bacteria. The polypeptide is Chloramphenicol acetyltransferase (cat) (Morganella morganii (Proteus morganii)).